The chain runs to 335 residues: 2-acylglycerol O-acyltransferase 1 (335 aa).

Helical transmembrane passes span 24-44 (WLLSFLLFAQVCLGIIVFLII) and 104-124 (YIFGFHPHGVLVVGAFGNFCT). 2 N-linked (GlcNAc...) asparagine glycosylation sites follow: asparagine 125 and asparagine 180.

Belongs to the diacylglycerol acyltransferase family.

The protein localises to the endoplasmic reticulum membrane. It carries out the reaction a 2-acylglycerol + an acyl-CoA = a 1,2-diacylglycerol + CoA. The catalysed reaction is 2-(9Z-octadecenoyl)-glycerol + butanoyl-CoA = 1-butanoyl-2-(9Z-octadecenoyl)-glycerol + CoA. It catalyses the reaction 2-(9Z-octadecenoyl)-glycerol + octanoyl-CoA = 1-octanoyl-2-(9Z-octadecenoyl)-glycerol + CoA. The enzyme catalyses 2-(9Z-octadecenoyl)-glycerol + dodecanoyl-CoA = 1-dodecanoyl-2-(9Z-octadecenoyl)-glycerol + CoA. It carries out the reaction 2-(9Z-octadecenoyl)-glycerol + tetradecanoyl-CoA = 1-tetradecanoyl-2-(9Z-octadecenoyl)-glycerol + CoA. The catalysed reaction is 2-(9Z-octadecenoyl)-glycerol + hexadecanoyl-CoA = 1-hexadecanoyl-2-(9Z-octadecenoyl)-glycerol + CoA. It catalyses the reaction 2-(9Z-octadecenoyl)-glycerol + octadecanoyl-CoA = 1-octadecanoyl-2-(9Z-octadecenoyl)-glycerol + CoA. The enzyme catalyses eicosanoyl-CoA + 2-(9Z-octadecenoyl)-glycerol = 1-eicosanoyl-2-(9Z-octadecenoyl)-glycerol + CoA. It carries out the reaction 2-(9Z-octadecenoyl)-glycerol + (9Z)-octadecenoyl-CoA = 1,2-di-(9Z-octadecenoyl)-glycerol + CoA. The catalysed reaction is 2-(9Z-octadecenoyl)-glycerol + (9Z,12Z)-octadecadienoyl-CoA = 1-(9Z,12Z-octadecadienoyl)-2-(9Z-octadecenoyl)-glycerol + CoA. It catalyses the reaction 2-(9Z-octadecenoyl)-glycerol + (5Z,8Z,11Z,14Z)-eicosatetraenoyl-CoA = 1-(5Z,8Z,11Z,14Z-eicosatetraenoyl)-2-(9Z-octadecenoyl)-glycerol + CoA. The enzyme catalyses a 2-acylglycerol + an acyl-CoA = a 1,2-diacyl-sn-glycerol + CoA. It carries out the reaction a 2-acylglycerol + an acyl-CoA = a 2,3-diacyl-sn-glycerol + CoA. The catalysed reaction is a 1-acylglycerol + an acyl-CoA = a 1,2-diacylglycerol + CoA. It catalyses the reaction 1-dodecanoylglycerol + (9Z)-octadecenoyl-CoA = 1-dodecanoyl-2-(9Z-octadecenoyl)-glycerol + CoA. The enzyme catalyses 1-tetradecanoylglycerol + (9Z)-octadecenoyl-CoA = 1-tetradecanoyl-2-(9Z-octadecenoyl)-glycerol + CoA. It carries out the reaction 1-hexadecanoylglycerol + (9Z)-octadecenoyl-CoA = 1-hexadecanoyl-2-(9Z-octadecenoyl)-glycerol + CoA. The catalysed reaction is 1-(9Z-octadecenoyl)-glycerol + (9Z)-octadecenoyl-CoA = 1,2-di-(9Z-octadecenoyl)-glycerol + CoA. It catalyses the reaction 1-(9Z,12Z-octadecadienoyl)-glycerol + (9Z)-octadecenoyl-CoA = 1-(9Z,12Z-octadecadienoyl)-2-(9Z-octadecenoyl)-glycerol + CoA. The enzyme catalyses 1-(9Z,12Z,15Z-octadecatrienoyl)-glycerol + (9Z)-octadecenoyl-CoA = 1-(9Z,12Z,15Z-octadecatrienoyl)-2-(9Z-octadecenoyl)-glycerol + CoA. It carries out the reaction 1-(5Z,8Z,11Z,14Z-eicosatetraenoyl)-glycerol + (9Z)-octadecenoyl-CoA = 1-(5Z,8Z,11Z,14Z-eicosatetraenoyl)-2-(9Z-octadecenoyl)-glycerol + CoA. The catalysed reaction is a 1-acylglycerol + an acyl-CoA = a 1,3-diacylglycerol + CoA. It catalyses the reaction 1-dodecanoylglycerol + (9Z)-octadecenoyl-CoA = 1-dodecanoyl-3-(9Z-octadecenoyl)-glycerol + CoA. The enzyme catalyses 1-hexadecanoylglycerol + (9Z)-octadecenoyl-CoA = 1-(9Z-octadecenoyl)-3-hexadecanoylglycerol + CoA. It carries out the reaction 1-octadecanoylglycerol + (9Z)-octadecenoyl-CoA = 1-octadecanoyl-3-(9Z-octadecenoyl)-glycerol + CoA. The catalysed reaction is 1-(9Z-octadecenoyl)-sn-glycerol + (9Z)-octadecenoyl-CoA = 1,3-di-(9Z-octadecenoyl)-glycerol + CoA. It catalyses the reaction 1-(9Z,12Z-octadecadienoyl)-glycerol + (9Z)-octadecenoyl-CoA = 1-(9Z-octadecenoyl)-3-(9Z,12Z-octadecadienoyl)-glycerol + CoA. The enzyme catalyses 1-(9Z,12Z,15Z-octadecatrienoyl)-glycerol + (9Z)-octadecenoyl-CoA = 1-(9Z,12Z,15Z-octadecatrienoyl)-3-(9Z-octadecenoyl)-glycerol + CoA. It carries out the reaction a 1-acyl-sn-glycerol + an acyl-CoA = a 1,3-diacyl-sn-glycerol + CoA. The catalysed reaction is a 3-acyl-sn-glycerol + an acyl-CoA = a 1,3-diacyl-sn-glycerol + CoA. It catalyses the reaction 3-octadecanoyl-sn-glycerol + (9Z)-octadecenoyl-CoA = 1-(9Z-octadecenoyl)-3-octadecanoyl-sn-glycerol + CoA. It functions in the pathway glycerolipid metabolism; triacylglycerol biosynthesis. Involved in glycerolipid synthesis and lipid metabolism. Catalyzes the formation of diacylglycerol, the precursor of triacylglycerol, by transferring the acyl chain of a fatty acyl-CoA to a monoacylglycerol, mainly at the sn-1 or sn-3 positions. It uses both sn-2-monoacylglycerol (2-acylglycerol) and sn-1-monoacylglycerol (1-acyl-sn-glycerol) equally well as substrates, and uses sn-3-monoacylglycerol (3-acyl-sn-glycerol) with lower efficiency. Probably not involved in absorption of dietary fat in the small intestine. The sequence is that of 2-acylglycerol O-acyltransferase 1 (MOGAT1) from Bos taurus (Bovine).